We begin with the raw amino-acid sequence, 139 residues long: D-ribose pyranase (139 aa).

The Proton donor role is filled by H20. Substrate contacts are provided by residues D28, H106, and 128 to 130; that span reads YAN.

It belongs to the RbsD / FucU family. RbsD subfamily. As to quaternary structure, homodecamer.

Its subcellular location is the cytoplasm. The catalysed reaction is beta-D-ribopyranose = beta-D-ribofuranose. The protein operates within carbohydrate metabolism; D-ribose degradation; D-ribose 5-phosphate from beta-D-ribopyranose: step 1/2. Its function is as follows. Catalyzes the interconversion of beta-pyran and beta-furan forms of D-ribose. The chain is D-ribose pyranase from Escherichia coli O45:K1 (strain S88 / ExPEC).